Here is a 448-residue protein sequence, read N- to C-terminus: Argininosuccinate synthase (448 aa).

ATP is bound by residues 17-25 (AFSGGLDTS) and Ala43. An L-citrulline-binding site is contributed by Tyr99. The ATP site is built by Gly129 and Thr131. Residues Thr131, Asn135, and Asp136 each contribute to the L-aspartate site. Residue Asn135 coordinates L-citrulline. Asp136 is a binding site for ATP. The L-citrulline site is built by Arg139 and Ser192. Asp194 serves as a coordination point for ATP. Positions 201, 203, and 280 each coordinate L-citrulline.

Belongs to the argininosuccinate synthase family. Type 2 subfamily. Homotetramer.

The protein localises to the cytoplasm. It catalyses the reaction L-citrulline + L-aspartate + ATP = 2-(N(omega)-L-arginino)succinate + AMP + diphosphate + H(+). It functions in the pathway amino-acid biosynthesis; L-arginine biosynthesis; L-arginine from L-ornithine and carbamoyl phosphate: step 2/3. The chain is Argininosuccinate synthase from Pectobacterium atrosepticum (strain SCRI 1043 / ATCC BAA-672) (Erwinia carotovora subsp. atroseptica).